The sequence spans 635 residues: Threonine--tRNA ligase (635 aa).

The TGS domain maps to 1-61 (MVSIRLPDGS…DHDVALAIVT (61 aa)). Residues 242-533 (DHRKLGKQLD…LIEHHAGAMP (292 aa)) are catalytic. Positions 333, 384, and 510 each coordinate Zn(2+).

It belongs to the class-II aminoacyl-tRNA synthetase family. Homodimer. Zn(2+) serves as cofactor.

It localises to the cytoplasm. The enzyme catalyses tRNA(Thr) + L-threonine + ATP = L-threonyl-tRNA(Thr) + AMP + diphosphate + H(+). Functionally, catalyzes the attachment of threonine to tRNA(Thr) in a two-step reaction: L-threonine is first activated by ATP to form Thr-AMP and then transferred to the acceptor end of tRNA(Thr). Also edits incorrectly charged L-seryl-tRNA(Thr). This is Threonine--tRNA ligase from Paraburkholderia phytofirmans (strain DSM 17436 / LMG 22146 / PsJN) (Burkholderia phytofirmans).